The following is a 208-amino-acid chain: MKIVEVKHPLIKHKIGLMRAADVSTKDFRALATEVGSLLTYEATSDLETEVVTIEGWNGPVEIERIKGKKVTVVPILRAGLGMMDGVLEHIPSARISVVGIYRNEETLEPVPYFKKLANDVGERLAIVVDPMLATGGSMIATLDLLKAAGCKQIKVLVLVAAPEGIKALEAAHPDIELYTAAIDSHLNENGYIIPGLGDAGDKIFGTK.

5-phospho-alpha-D-ribose 1-diphosphate is bound by residues Arg-78, Arg-103, and 130-138 (DPMLATGGS). Uracil is bound by residues Ile-193 and 198 to 200 (GDA). Asp-199 provides a ligand contact to 5-phospho-alpha-D-ribose 1-diphosphate.

Belongs to the UPRTase family. The cofactor is Mg(2+).

The catalysed reaction is UMP + diphosphate = 5-phospho-alpha-D-ribose 1-diphosphate + uracil. Its pathway is pyrimidine metabolism; UMP biosynthesis via salvage pathway; UMP from uracil: step 1/1. With respect to regulation, allosterically activated by GTP. Functionally, catalyzes the conversion of uracil and 5-phospho-alpha-D-ribose 1-diphosphate (PRPP) to UMP and diphosphate. This is Uracil phosphoribosyltransferase from Glaesserella parasuis serovar 5 (strain SH0165) (Haemophilus parasuis).